The primary structure comprises 380 residues: RNA-binding motif protein, Y chromosome (380 aa).

The RRM domain maps to 8 to 86 (GKIFIGGLNI…KRIKVKQARR (79 aa)). Disordered regions lie at residues 82–226 (KQAR…STSR) and 279–358 (HEAP…YSAS). The span at 166 to 178 (RSATSAQTRSNTG) shows a compositional bias: polar residues. Composition is skewed to basic and acidic residues over residues 180-190 (RGREPHRREIS) and 333-351 (IDRE…HSPK).

Interacts with SRSF3/SRP20, SRSF9/SRP30, SRSF5/SRP40, and SRSF6/SRP55; this interaction inhibits SRSF family member pre-mRNA splicing. Interacts with splicing factor proteins and KHDRBS3. In terms of tissue distribution, testis-specific.

It is found in the nucleus. In terms of biological role, RNA-binding protein involved in pre-mRNA splicing. Required for sperm development. Acts additively with TRA2B to promote exon 7 inclusion of the survival motor neuron SMN. Binds non-specifically to mRNAs. In Mus musculus (Mouse), this protein is RNA-binding motif protein, Y chromosome.